The primary structure comprises 414 residues: FAD-dependent monooxygenase adaC (414 aa).

The FAD site is built by Glu32, Ala43, Arg115, Asp325, and Gly338.

The protein belongs to the paxM FAD-dependent monooxygenase family. The cofactor is FAD.

The catalysed reaction is 3-(2,4-dioxopentyl)-3,6,8,9-tetrahydroxy-1-oxo-1,2,3,4-tetrahydroanthracene-2-carboxyl-[ACP] + NADPH + O2 + H(+) = 3-(2,4-dioxopentyl)-2,3,6,8,9-pentahydroxy-1-oxo-1,2,3,4-tetrahydroanthracene-2-carboxyl-[ACP] + NADP(+) + H2O. It participates in secondary metabolite biosynthesis. Its function is as follows. FAD-dependent monooxygenase; part of the gene cluster that mediates the biosynthesis of the linear tetracyclic TAN-1612 neuropeptide Y receptor antagonist. The decaketide backbone of TAN-1612 is synthesized by the non-reducing polyketide synthase adaA via condensation of one acetyl-CoA starter unit with 9 malonyl-CoA units. The FAD-dependent monooxygenase adaC then performs hydroxylation at C2 while the polaketide chain is still attached to the NRPKS adaA. The alpha-hydroxylation step at C2 appears to be crucial for the following C18-C1 Claisen cyclization and release of the C9-hydroxyl version of TAN-1612 from the NRPKS adaA, two steps performed by the lactamase-like protein adaB. Finally, the O-methyltransferase adaD performs the C9 O-methylation to complete the biosynthesis of TAN-1612. The protein is FAD-dependent monooxygenase adaC of Aspergillus niger (strain ATCC MYA-4892 / CBS 513.88 / FGSC A1513).